A 461-amino-acid chain; its full sequence is Ribosomal protein uS12 methylthiotransferase RimO (461 aa).

The MTTase N-terminal domain maps to 13–128 (PKVGFVSLGC…VMQHVHMHLP (116 aa)). 6 residues coordinate [4Fe-4S] cluster: C22, C58, C87, C159, C163, and C166. A Radical SAM core domain is found at 145–390 (LTPRHYAYLK…MEVAEEVSAK (246 aa)). Positions 393-461 (AKKVGKTLKV…ADGHDLWGEV (69 aa)) constitute a TRAM domain.

This sequence belongs to the methylthiotransferase family. RimO subfamily. Requires [4Fe-4S] cluster as cofactor.

It localises to the cytoplasm. It carries out the reaction L-aspartate(89)-[ribosomal protein uS12]-hydrogen + (sulfur carrier)-SH + AH2 + 2 S-adenosyl-L-methionine = 3-methylsulfanyl-L-aspartate(89)-[ribosomal protein uS12]-hydrogen + (sulfur carrier)-H + 5'-deoxyadenosine + L-methionine + A + S-adenosyl-L-homocysteine + 2 H(+). Catalyzes the methylthiolation of an aspartic acid residue of ribosomal protein uS12. This is Ribosomal protein uS12 methylthiotransferase RimO from Paraburkholderia xenovorans (strain LB400).